The primary structure comprises 641 residues: MSDQFTLPLRPLIEERDHQDLLPVEIAQISAQWGSFRDVNEETLRAKIEEEKNKEYTIDDEEGEGASVDLDTTERLDQLYKKRAEITQFAMQAHMEAMFALDFISLLLSKYTPRQAETSMSAFLKQVAPLGSLTAELVNPPPKSEAAVRDAKAVSRGWRLQSFNAAADKLLKSAARLETEVASETRYWSEVLAVKDKGWKVCRLPREGQALGVQYGFLEATPIFRDRGLAALRRSEDGGLILDKGLVPAKAKTVRVRVKNRGVVTGCSKPYRSAVQDSESIEGRILQARDTLYEEELFYELVREARIMGSQGVSTGQNLVQFSVSEDEEVLLDLVDPDVAYADDSETSLEHTVVADALAHSIRILLSYAHRQNRRRRTQPPPPLTQKRRHVPEYLLLRPTMAYLQHSFHVRWLESFLGDVYGVLRAAGLESKFTATPYASVDLAHIDRSVPTVEGLVKQFLLPLESTFSADLITPQTSFNVKTRTNLLVPPFGTHFEIALNMPHYPDVQPPSRIGQHDQVAMMVTHFLLLDIVSTISHGQGQPVKSETKTTPLSWEVTYPHHGELLAVASDGRQKKMKVQLSRSELSVQMFETHGTDSYSRLVGAEGGMLPLPSQSQTWTADAATPHPSLMEFVASVSKSA.

A coiled-coil region spans residues 159 to 186 (RLQSFNAAADKLLKSAARLETEVASETR).

Belongs to the Mediator complex subunit 17 family. In terms of assembly, component of the Mediator complex.

It is found in the nucleus. Functionally, component of the Mediator complex, a coactivator involved in the regulated transcription of nearly all RNA polymerase II-dependent genes. Mediator functions as a bridge to convey information from gene-specific regulatory proteins to the basal RNA polymerase II transcription machinery. Mediator is recruited to promoters by direct interactions with regulatory proteins and serves as a scaffold for the assembly of a functional preinitiation complex with RNA polymerase II and the general transcription factors. In Aspergillus clavatus (strain ATCC 1007 / CBS 513.65 / DSM 816 / NCTC 3887 / NRRL 1 / QM 1276 / 107), this protein is Mediator of RNA polymerase II transcription subunit 17 (srb4).